Reading from the N-terminus, the 66-residue chain is Cold shock protein 2 (66 aa).

The region spanning 4-63 (GTVKWFNADKGFGFITGEDGTDVFVHFSAIQTDGFKTLDEGQKVTYDEEQGDRGPQATNV) is the CSD domain.

It localises to the cytoplasm. In Lactiplantibacillus plantarum (strain ATCC BAA-793 / NCIMB 8826 / WCFS1) (Lactobacillus plantarum), this protein is Cold shock protein 2 (cspL).